The chain runs to 132 residues: Sec-independent protein translocase protein TatB (132 aa).

Residues 2 to 22 (FDGIGFMELLLIGILGLVVLG) traverse the membrane as a helical segment. 2 stretches are compositionally biased toward polar residues: residues 86–95 (LKQAAQSVNR) and 116–132 (IAET…KNNG). Residues 86–132 (LKQAAQSVNRPYQLDESNEQEPKIAPPQANIAETPTQSGDTHSKNNG) are disordered.

Belongs to the TatB family. In terms of assembly, the Tat system comprises two distinct complexes: a TatABC complex, containing multiple copies of TatA, TatB and TatC subunits, and a separate TatA complex, containing only TatA subunits. Substrates initially bind to the TatABC complex, which probably triggers association of the separate TatA complex to form the active translocon.

The protein localises to the cell inner membrane. Functionally, part of the twin-arginine translocation (Tat) system that transports large folded proteins containing a characteristic twin-arginine motif in their signal peptide across membranes. Together with TatC, TatB is part of a receptor directly interacting with Tat signal peptides. TatB may form an oligomeric binding site that transiently accommodates folded Tat precursor proteins before their translocation. The polypeptide is Sec-independent protein translocase protein TatB (Shewanella denitrificans (strain OS217 / ATCC BAA-1090 / DSM 15013)).